The sequence spans 366 residues: Aminomethyltransferase (366 aa).

It belongs to the GcvT family. As to quaternary structure, the glycine cleavage system is composed of four proteins: P, T, L and H.

It carries out the reaction N(6)-[(R)-S(8)-aminomethyldihydrolipoyl]-L-lysyl-[protein] + (6S)-5,6,7,8-tetrahydrofolate = N(6)-[(R)-dihydrolipoyl]-L-lysyl-[protein] + (6R)-5,10-methylene-5,6,7,8-tetrahydrofolate + NH4(+). In terms of biological role, the glycine cleavage system catalyzes the degradation of glycine. The polypeptide is Aminomethyltransferase (Bacillus cereus (strain ZK / E33L)).